A 217-amino-acid polypeptide reads, in one-letter code: tRNA (guanine-N(7)-)-methyltransferase (217 aa).

The S-adenosyl-L-methionine site is built by Glu-43, Asp-68, Asn-101, and Asn-123. Residue Lys-127 coordinates substrate. The interval 129-134 (KHNKRR) is interaction with RNA. Substrate is bound by residues Asp-159 and 196–199 (TEYE).

The protein belongs to the class I-like SAM-binding methyltransferase superfamily. TrmB family.

It catalyses the reaction guanosine(46) in tRNA + S-adenosyl-L-methionine = N(7)-methylguanosine(46) in tRNA + S-adenosyl-L-homocysteine. It participates in tRNA modification; N(7)-methylguanine-tRNA biosynthesis. Its function is as follows. Catalyzes the formation of N(7)-methylguanine at position 46 (m7G46) in tRNA. The protein is tRNA (guanine-N(7)-)-methyltransferase of Clostridium botulinum (strain Okra / Type B1).